Reading from the N-terminus, the 1330-residue chain is Sister chromatid cohesion protein PDS5 homolog A (1330 aa).

The stretch at 387 to 423 (SLVNDQLLGFVRERTLDKRWRVRKEAMMGLAQLYKKY) is one HEAT repeat. The interval 1138 to 1330 (VNKPLSATGR…AAQRQIDLQR (193 aa)) is disordered. Positions 1160 to 1171 (SNISVNSELSSS) are enriched in low complexity. Polar residues predominate over residues 1216-1225 (SDQATQGNST).

It belongs to the PDS5 family. As to quaternary structure, interacts with the cohesin complex. Binds chromatin in a cohesin-dependent manner.

Its subcellular location is the nucleus. May regulate sister chromatid cohesion during mitosis and couple it to DNA replication. The sequence is that of Sister chromatid cohesion protein PDS5 homolog A from Gallus gallus (Chicken).